The sequence spans 70 residues: Protein SlyX homolog (70 aa).

This sequence belongs to the SlyX family.

This is Protein SlyX homolog from Rhizobium meliloti (strain 1021) (Ensifer meliloti).